Here is a 411-residue protein sequence, read N- to C-terminus: S-adenosylmethionine synthase (411 aa).

An ATP-binding site is contributed by histidine 15. Residue aspartate 17 participates in Mg(2+) binding. Glutamate 43 is a K(+) binding site. Residues glutamate 56 and glutamine 99 each coordinate L-methionine. Positions 99 to 109 (QSPDIAQGVDT) are flexible loop. ATP contacts are provided by residues 174–176 (DGK), 247–248 (RF), aspartate 256, 262–263 (RK), alanine 279, and lysine 283. Aspartate 256 is an L-methionine binding site. Lysine 287 contributes to the L-methionine binding site.

It belongs to the AdoMet synthase family. In terms of assembly, homotetramer; dimer of dimers. Requires Mg(2+) as cofactor. The cofactor is K(+).

It is found in the cytoplasm. The catalysed reaction is L-methionine + ATP + H2O = S-adenosyl-L-methionine + phosphate + diphosphate. Its pathway is amino-acid biosynthesis; S-adenosyl-L-methionine biosynthesis; S-adenosyl-L-methionine from L-methionine: step 1/1. In terms of biological role, catalyzes the formation of S-adenosylmethionine (AdoMet) from methionine and ATP. The overall synthetic reaction is composed of two sequential steps, AdoMet formation and the subsequent tripolyphosphate hydrolysis which occurs prior to release of AdoMet from the enzyme. This chain is S-adenosylmethionine synthase, found in Streptomyces spectabilis.